A 360-amino-acid chain; its full sequence is 3-isopropylmalate dehydrogenase (360 aa).

76–89 (GPKWDTIERDIRPE) is an NAD(+) binding site. Arg-96, Arg-106, Arg-134, and Asp-224 together coordinate substrate. Positions 224, 248, and 252 each coordinate Mg(2+). 282–294 (GSAPDIAGKGIAN) contributes to the NAD(+) binding site.

Belongs to the isocitrate and isopropylmalate dehydrogenases family. LeuB type 1 subfamily. Homodimer. Mg(2+) is required as a cofactor. It depends on Mn(2+) as a cofactor.

Its subcellular location is the cytoplasm. It carries out the reaction (2R,3S)-3-isopropylmalate + NAD(+) = 4-methyl-2-oxopentanoate + CO2 + NADH. It functions in the pathway amino-acid biosynthesis; L-leucine biosynthesis; L-leucine from 3-methyl-2-oxobutanoate: step 3/4. In terms of biological role, catalyzes the oxidation of 3-carboxy-2-hydroxy-4-methylpentanoate (3-isopropylmalate) to 3-carboxy-4-methyl-2-oxopentanoate. The product decarboxylates to 4-methyl-2 oxopentanoate. This chain is 3-isopropylmalate dehydrogenase, found in Pseudomonas syringae pv. syringae (strain B728a).